Here is a 311-residue protein sequence, read N- to C-terminus: Peptide methionine sulfoxide reductase MsrA/MsrB 2 (311 aa).

Residues 1 to 155 (MHEIYLAGGC…PNGYCHINVN (155 aa)) are peptide methionine sulfoxide reductase A. Residue cysteine 10 is part of the active site. Residues 172–295 (DEELKKTLSP…NSLSIRFIPK (124 aa)) form the MsrB domain. Cysteine 284 serves as the catalytic Nucleophile.

In the N-terminal section; belongs to the MsrA Met sulfoxide reductase family. It in the C-terminal section; belongs to the MsrB Met sulfoxide reductase family.

The catalysed reaction is L-methionyl-[protein] + [thioredoxin]-disulfide + H2O = L-methionyl-(S)-S-oxide-[protein] + [thioredoxin]-dithiol. It catalyses the reaction [thioredoxin]-disulfide + L-methionine + H2O = L-methionine (S)-S-oxide + [thioredoxin]-dithiol. It carries out the reaction L-methionyl-[protein] + [thioredoxin]-disulfide + H2O = L-methionyl-(R)-S-oxide-[protein] + [thioredoxin]-dithiol. Its function is as follows. Has an important function as a repair enzyme for proteins that have been inactivated by oxidation. Catalyzes the reversible oxidation-reduction of methionine sulfoxide in proteins to methionine. This Streptococcus pneumoniae serotype 4 (strain ATCC BAA-334 / TIGR4) protein is Peptide methionine sulfoxide reductase MsrA/MsrB 2 (msrAB2).